Reading from the N-terminus, the 109-residue chain is Large ribosomal subunit protein uL24 (109 aa).

The protein belongs to the universal ribosomal protein uL24 family. Part of the 50S ribosomal subunit.

One of two assembly initiator proteins, it binds directly to the 5'-end of the 23S rRNA, where it nucleates assembly of the 50S subunit. In terms of biological role, one of the proteins that surrounds the polypeptide exit tunnel on the outside of the subunit. This is Large ribosomal subunit protein uL24 from Geotalea uraniireducens (strain Rf4) (Geobacter uraniireducens).